A 432-amino-acid chain; its full sequence is Lecithin-cholesterol acyltransferase-like 1 (432 aa).

Residues 7-29 traverse the membrane as a helical segment; the sequence is HYSVVIAILVVVTMTSMCQAVGS. Ser209 (acyl-ester intermediate) is an active-site residue. Residues Asp374 and His400 each act as charge relay system in the active site.

The protein belongs to the AB hydrolase superfamily. Lipase family.

The protein resides in the membrane. This is Lecithin-cholesterol acyltransferase-like 1 (LCAT1) from Arabidopsis thaliana (Mouse-ear cress).